The following is a 71-amino-acid chain: Small ribosomal subunit protein bS21 (71 aa).

The protein belongs to the bacterial ribosomal protein bS21 family.

In Photobacterium profundum (strain SS9), this protein is Small ribosomal subunit protein bS21.